Here is a 121-residue protein sequence, read N- to C-terminus: Large ribosomal subunit protein bL19 (121 aa).

It belongs to the bacterial ribosomal protein bL19 family.

Functionally, this protein is located at the 30S-50S ribosomal subunit interface and may play a role in the structure and function of the aminoacyl-tRNA binding site. The chain is Large ribosomal subunit protein bL19 from Mesomycoplasma hyopneumoniae (strain 7448) (Mycoplasma hyopneumoniae).